Consider the following 156-residue polypeptide: Small ribosomal subunit protein uS7c (156 aa).

It belongs to the universal ribosomal protein uS7 family. Part of the 30S ribosomal subunit.

Its subcellular location is the plastid. The protein localises to the chloroplast. Its function is as follows. One of the primary rRNA binding proteins, it binds directly to 16S rRNA where it nucleates assembly of the head domain of the 30S subunit. This is Small ribosomal subunit protein uS7c (rps7) from Stangeria eriopus (Natal grass cycad).